Consider the following 411-residue polypeptide: Multidrug resistance protein MdtA (411 aa).

The N-terminal stretch at 1–19 (MNAKRIRGLLILAAVIAIA) is a signal peptide. Over residues 31 to 49 (PAAPGTSEQHAARTSHSEN) the composition is skewed to polar residues. The disordered stretch occupies residues 31–58 (PAAPGTSEQHAARTSHSENSGSGGGRRA).

This sequence belongs to the membrane fusion protein (MFP) (TC 8.A.1) family. As to quaternary structure, part of a tripartite efflux system composed of MdtA, MdtB and MdtC.

The protein localises to the cell inner membrane. The chain is Multidrug resistance protein MdtA from Pectobacterium atrosepticum (strain SCRI 1043 / ATCC BAA-672) (Erwinia carotovora subsp. atroseptica).